Consider the following 247-residue polypeptide: Neurotrophic factor BDNF precursor form (247 aa).

The first 18 residues, 1–18 (MTILFLTMVISYFGCMKA), serve as a signal peptide directing secretion. A propeptide spanning residues 19–128 (APMKEANVRG…AANMSVRVRR (110 aa)) is cleaved from the precursor. N121 carries N-linked (GlcNAc...) asparagine glycosylation. 3 disulfides stabilise this stretch: C141–C208, C186–C237, and C196–C239.

Belongs to the NGF-beta family. In terms of assembly, monomers and homodimers. Binds to NTRK2/TRKB. Can form heterodimers with other neurotrophin family members, such as NTF3 and NTF4 (in vitro), but the physiological relevance of this is not clear. BDNF precursor form: interacts with the heterodimer formed by NGFR and SORCS2. Mature BDNF has much lower affinity for the heterodimer formed by NGFR and SORCS2. In terms of processing, N-glycosylated and glycosulfated, contrary to mature BDNF. Mature BDNF is produced by proteolytic removal of the propeptide, catalyzed by a FURIN family member. In addition, the precursor form is proteolytically cleaved within the propeptide, but this is not an obligatory intermediate for the production of mature BDNF. Can be converted into mature BDNF by plasmin (PLG).

The protein localises to the secreted. Its function is as follows. Important signaling molecule that activates signaling cascades downstream of NTRK2. During development, promotes the survival and differentiation of selected neuronal populations of the peripheral and central nervous systems. Participates in axonal growth, pathfinding and in the modulation of dendritic growth and morphology. Major regulator of synaptic transmission and plasticity at adult synapses in many regions of the CNS. The versatility of BDNF is emphasized by its contribution to a range of adaptive neuronal responses including long-term potentiation (LTP), long-term depression (LTD), certain forms of short-term synaptic plasticity, as well as homeostatic regulation of intrinsic neuronal excitability. In terms of biological role, important signaling molecule that activates signaling cascades downstream of NTRK2. Activates signaling cascades via the heterodimeric receptor formed by NGFR and SORCS2. Signaling via NGFR and SORCS2 plays a role in synaptic plasticity and long-term depression (LTD). Binding to NGFR and SORCS2 promotes neuronal apoptosis. Promotes neuronal growth cone collapse. The chain is Neurotrophic factor BDNF precursor form (BDNF) from Felis catus (Cat).